The primary structure comprises 217 residues: MESVALYSFQATESDELAFNKGDTLKILNMEDDQNWYKAELRGAEGFVPKNYIRVKPHPWYSGRISRQLAEETLMKRNHLGAFLIRESESSPGEFSVSVNYGDQVQHFKVLREASGKYFLWEEKFNSLNELVDFYRTTTIAKRRQIFLCDEQPLIKPSRACFAQAQFDFSAQDPSQLSLRRGDIVEVVEREDPHWWRGRAGGRLGFFPRSYVQPVHL.

The region spanning 1–58 is the SH3 1 domain; it reads MESVALYSFQATESDELAFNKGDTLKILNMEDDQNWYKAELRGAEGFVPKNYIRVKPH. In terms of domain architecture, SH2 spans 60–152; the sequence is WYSGRISRQL…RRQIFLCDEQ (93 aa). An SH3 2 domain is found at 158-217; sequence SRACFAQAQFDFSAQDPSQLSLRRGDIVEVVEREDPHWWRGRAGGRLGFFPRSYVQPVHL.

The protein belongs to the GRB2/sem-5/DRK family. Associates through its SH2 domain with ligand-activated receptors for stem cell factor (KIT) and erythropoietin (EPOR). Also forms a stable complex with the Bcr-Abl oncoprotein. GRAP is associated with the Ras guanine nucleotide exchange factor SOS1, primarily through its N-terminal SH3 domain. Interacts with phosphorylated LAT upon TCR activation. Interacts with SHB. In terms of tissue distribution, expressed in inner ear, in neruonal fibers innervating cochlear and utricular auditory hair cells (at protein level).

Its subcellular location is the membrane. It localises to the synapse. Couples signals from receptor and cytoplasmic tyrosine kinases to the Ras signaling pathway. Plays a role in the inner ear and in hearing. The protein is GRB2-related adapter protein of Mus musculus (Mouse).